Here is a 37-residue protein sequence, read N- to C-terminus: Large ribosomal subunit protein bL36A (37 aa).

This sequence belongs to the bacterial ribosomal protein bL36 family.

In Arthrobacter sp. (strain FB24), this protein is Large ribosomal subunit protein bL36A.